A 382-amino-acid chain; its full sequence is Opsin Rh3 (382 aa).

At Met1–Met56 the chain is on the extracellular side. N-linked (GlcNAc...) asparagine glycosylation is present at Asn12. Residues Asn57 to Val81 traverse the membrane as a helical segment. Over Phe82–Asn93 the chain is Cytoplasmic. The chain crosses the membrane as a helical span at residues Ile94–Phe118. The Extracellular portion of the chain corresponds to His119–Phe132. A disulfide bond links Cys129 and Cys206. A helical membrane pass occupies residues Gly133–Tyr152. At Asp153–Lys170 the chain is on the cytoplasmic side. The chain crosses the membrane as a helical span at residues Ala171–Gly195. The Extracellular segment spans residues Arg196–Leu219. A helical membrane pass occupies residues Phe220–Val247. At Phe248 to Lys283 the chain is on the cytoplasmic side. A helical membrane pass occupies residues Ala284–Ala307. At Phe308 to Thr315 the chain is on the extracellular side. The chain crosses the membrane as a helical span at residues Pro316–Ser340. N6-(retinylidene)lysine is present on Lys327. The Cytoplasmic segment spans residues His341–Ala382.

This sequence belongs to the G-protein coupled receptor 1 family. Opsin subfamily. Post-translationally, phosphorylated on some or all of the serine and threonine residues present in the C-terminal region.

Its subcellular location is the membrane. Visual pigments are the light-absorbing molecules that mediate vision. They consist of an apoprotein, opsin, covalently linked to cis-retinal. In Drosophila pseudoobscura pseudoobscura (Fruit fly), this protein is Opsin Rh3 (Rh3).